We begin with the raw amino-acid sequence, 253 residues long: uncharacterized protein (253 aa).

The protein belongs to the A.longa ORF167/ORF288 family.

The protein resides in the plastid. This is an uncharacterized protein from Euglena longa (Euglenophycean alga).